A 393-amino-acid chain; its full sequence is Elongation factor Tu (393 aa).

One can recognise a tr-type G domain in the interval 10–203; that stretch reads KPHVNIGTIG…AVDNYIPEPV (194 aa). Residues 19 to 26 form a G1 region; that stretch reads GHVDHGKT. 19-26 serves as a coordination point for GTP; that stretch reads GHVDHGKT. Thr26 is a binding site for Mg(2+). Residues 60 to 64 form a G2 region; it reads GITIS. Residues 81 to 84 are G3; the sequence is DCPG. Residues 81-85 and 136-139 contribute to the GTP site; these read DCPGH and NKVD. Positions 136–139 are G4; it reads NKVD. Residues 173-175 are G5; sequence SAL.

This sequence belongs to the TRAFAC class translation factor GTPase superfamily. Classic translation factor GTPase family. EF-Tu/EF-1A subfamily. Monomer.

The protein resides in the cytoplasm. It carries out the reaction GTP + H2O = GDP + phosphate + H(+). Its function is as follows. GTP hydrolase that promotes the GTP-dependent binding of aminoacyl-tRNA to the A-site of ribosomes during protein biosynthesis. The polypeptide is Elongation factor Tu (Chlorobium phaeovibrioides (strain DSM 265 / 1930) (Prosthecochloris vibrioformis (strain DSM 265))).